The following is a 307-amino-acid chain: Glutaminase (307 aa).

Substrate contacts are provided by Ser-66, Asn-116, Glu-160, Asn-167, Tyr-191, Tyr-243, and Val-261.

Belongs to the glutaminase family. As to quaternary structure, homotetramer.

It catalyses the reaction L-glutamine + H2O = L-glutamate + NH4(+). This is Glutaminase from Saccharophagus degradans (strain 2-40 / ATCC 43961 / DSM 17024).